A 154-amino-acid polypeptide reads, in one-letter code: Homeobox protein engrailed (154 aa).

Positions 37 to 96 (EKRPRTAFSASQLQRLKQEFQQSNYLTEQRRRSLAKELTLSESQIKIWFQNKRAKIKKAS) form a DNA-binding region, homeobox. A disordered region spans residues 127 to 154 (KLLNGQNTSGDCSRSDYTSDSDGDSLTH). The span at 129–144 (LNGQNTSGDCSRSDYT) shows a compositional bias: polar residues. Residues 145–154 (SDSDGDSLTH) show a composition bias toward acidic residues.

It belongs to the engrailed homeobox family.

The protein resides in the nucleus. The chain is Homeobox protein engrailed (EN) from Tripneustes gratilla (Hawaian sea urchin).